Consider the following 452-residue polypeptide: GTPase Der (452 aa).

2 consecutive EngA-type G domains span residues Lys-9–Asp-170 and Leu-185–Asn-362. GTP is bound by residues Gly-15–Ser-22, Asp-62–Leu-66, Asn-124–Glu-127, Gly-191–Ser-198, Asp-238–Leu-242, and Asn-303–Asp-306. A KH-like domain is found at Lys-363 to Lys-448.

This sequence belongs to the TRAFAC class TrmE-Era-EngA-EngB-Septin-like GTPase superfamily. EngA (Der) GTPase family. In terms of assembly, associates with the 50S ribosomal subunit.

Functionally, GTPase that plays an essential role in the late steps of ribosome biogenesis. The chain is GTPase Der from Rickettsia bellii (strain RML369-C).